We begin with the raw amino-acid sequence, 101 residues long: Small ribosomal subunit protein bS6 (101 aa).

It belongs to the bacterial ribosomal protein bS6 family.

In terms of biological role, binds together with bS18 to 16S ribosomal RNA. The polypeptide is Small ribosomal subunit protein bS6 (Oleidesulfovibrio alaskensis (strain ATCC BAA-1058 / DSM 17464 / G20) (Desulfovibrio alaskensis)).